A 130-amino-acid polypeptide reads, in one-letter code: Protein ApaG (130 aa).

The region spanning 3–127 (RAVTRRIEVT…FSLDSPEGKR (125 aa)) is the ApaG domain.

The chain is Protein ApaG from Rhodopseudomonas palustris (strain ATCC BAA-98 / CGA009).